We begin with the raw amino-acid sequence, 302 residues long: Vacuolar protein sorting-associated protein 26A (302 aa).

The protein belongs to the VPS26 family. Component of the retromer complex which consists of VPS29 (MAG1), VPS26 (VPS26A or VPS26B), VPS35 (VPS35A or VPS35B or VPS35C), VPS5/17 (SNX1 or SNX2A or SNX2B). Component of a retromer subcomplex consisting of VPS29 (MAG1), VPS26 (VPS26A or VPS26B), VPS35 (VPS35A or VPS35B or VPS35C).

The protein localises to the cytoplasm. Its subcellular location is the endosome membrane. The protein resides in the prevacuolar compartment membrane. It is found in the golgi apparatus. It localises to the trans-Golgi network membrane. Its function is as follows. Plays a role in vesicular protein sorting. Component of the membrane-associated retromer complex which is essential in endosome-to-Golgi retrograde transport. The VPS29-VPS26-VPS35 subcomplex may be involved in recycling of specific cargos from endosome to the plasma membrane. The polypeptide is Vacuolar protein sorting-associated protein 26A (VPS26A) (Arabidopsis thaliana (Mouse-ear cress)).